The following is a 310-amino-acid chain: Ribosomal RNA small subunit methyltransferase H (310 aa).

S-adenosyl-L-methionine is bound by residues 33-35 (AGH), Asp-53, Phe-79, Asp-100, and Gln-107.

This sequence belongs to the methyltransferase superfamily. RsmH family.

It is found in the cytoplasm. It carries out the reaction cytidine(1402) in 16S rRNA + S-adenosyl-L-methionine = N(4)-methylcytidine(1402) in 16S rRNA + S-adenosyl-L-homocysteine + H(+). Its function is as follows. Specifically methylates the N4 position of cytidine in position 1402 (C1402) of 16S rRNA. The sequence is that of Ribosomal RNA small subunit methyltransferase H from Clostridium botulinum (strain Eklund 17B / Type B).